The chain runs to 788 residues: IQ motif and ubiquitin-like domain-containing protein (788 aa).

Residues 1 to 89 form a disordered region; it reads MSDPEEERVA…SLGSASGSQD (89 aa). A compositionally biased stretch (basic and acidic residues) spans 7 to 20; sequence ERVADSTAHYEEAG. Acidic residues predominate over residues 31–54; the sequence is EAEGSDVMPEQDDEVQELTTESEE. Positions 68–78 are enriched in basic and acidic residues; sequence KSDDSKPREEV. The span at 80–89 shows a compositional bias: polar residues; sequence SLGSASGSQD. The region spanning 127–203 is the Ubiquitin-like domain; the sequence is ATVKIVLIPA…VQVEVFSTLP (77 aa). One can recognise an IQ domain in the interval 334 to 363; the sequence is RLHAVIVIQTSYRRWHAKRYVESLRKQKKL.

In terms of assembly, component of the axonemal radial spoke 1 (RS1) complex, at least composed of spoke head proteins RSPH1, RSPH3B, RSPH9 and the cilia-specific component RSPH4A or sperm-specific component RSPH6A, spoke stalk proteins RSPH14, DNAJB13, DYDC1, ROPN1L and NME5, and the anchor protein IQUB. Does not appear to be part of radial spoke complexes 2 or 3 (RS2 or RS3). Interacts with CALM1. Interacts with DNAJB13. Interacts with DYNLL2. Interacts with NME5. Interacts with RSPH3. Interacts with RSPH9. Interacts with ZMYND10. Interacts with calmodulin; the interaction occurs in conditions of low but not high calcium. In terms of tissue distribution, expressed in the flagellum of sperm cells and cilia of tracheal epithelial cells (at protein level). High expression in testis, also present in brain and lung.

The protein resides in the cytoplasm. It is found in the cytoskeleton. Its subcellular location is the flagellum axoneme. It localises to the cell projection. The protein localises to the cilium. Its function is as follows. Anchors the radial spoke 1 (RS1) complex to the A microtubule of outer doublet microtubules in axonemes. The triple radial spokes (RS1, RS2 and RS3) are required to modulate beating of the sperm flagellum. May play a role in inhibiting signaling via MAPK1/ERK2 and MAPK3/ERK1. Additionally, may play a role in the functioning of cilia. Not required for the functioning of tracheal or ependymal cilia. The sequence is that of IQ motif and ubiquitin-like domain-containing protein (Iqub) from Mus musculus (Mouse).